Consider the following 220-residue polypeptide: Chloramphenicol acetyltransferase (220 aa).

Histidine 187 functions as the Proton acceptor in the catalytic mechanism.

Belongs to the chloramphenicol acetyltransferase family. Homotrimer.

It catalyses the reaction chloramphenicol + acetyl-CoA = chloramphenicol 3-acetate + CoA. This enzyme is an effector of chloramphenicol resistance in bacteria. This chain is Chloramphenicol acetyltransferase (cat86), found in Bacillus pumilus (Bacillus mesentericus).